The sequence spans 316 residues: Acetaldehyde dehydrogenase (316 aa).

NAD(+) is bound at residue 12 to 15 (SGNI). Cysteine 132 acts as the Acyl-thioester intermediate in catalysis. Residues 163 to 171 (SAGPGTRAN) and asparagine 289 contribute to the NAD(+) site.

Belongs to the acetaldehyde dehydrogenase family.

The enzyme catalyses acetaldehyde + NAD(+) + CoA = acetyl-CoA + NADH + H(+). The sequence is that of Acetaldehyde dehydrogenase (bphG) from Bordetella avium (strain 197N).